The following is a 475-amino-acid chain: 3-isopropylmalate dehydratase large subunit (475 aa).

The [4Fe-4S] cluster site is built by cysteine 353, cysteine 414, and cysteine 417.

Belongs to the aconitase/IPM isomerase family. LeuC type 1 subfamily. Heterodimer of LeuC and LeuD. It depends on [4Fe-4S] cluster as a cofactor.

The enzyme catalyses (2R,3S)-3-isopropylmalate = (2S)-2-isopropylmalate. The protein operates within amino-acid biosynthesis; L-leucine biosynthesis; L-leucine from 3-methyl-2-oxobutanoate: step 2/4. Functionally, catalyzes the isomerization between 2-isopropylmalate and 3-isopropylmalate, via the formation of 2-isopropylmaleate. In Ectopseudomonas mendocina (strain ymp) (Pseudomonas mendocina), this protein is 3-isopropylmalate dehydratase large subunit.